The chain runs to 160 residues: Non-secretory ribonuclease (160 aa).

The N-terminal stretch at 1–27 (MVPKLFTSPICLLLLLGLMGVEGSLHA) is a signal peptide. C-linked (Man) tryptophan glycosylation is present at W34. H42 acts as the Proton acceptor in catalysis. A glycan (N-linked (GlcNAc...) asparagine) is linked at N44. Intrachain disulfides connect C50/C110, C64/C122, C82/C137, and C89/C98. Y60 bears the 3'-nitrotyrosine mark. 65-69 (KNQNT) contacts substrate. 3 N-linked (GlcNAc...) asparagine glycosylation sites follow: N92, N111, and N138. Residue H155 is the Proton donor of the active site.

This sequence belongs to the pancreatic ribonuclease family. Interacts with and forms a tight 1:1 complex with RNH1. Dimerization of two such complexes may occur.

Its subcellular location is the lysosome. The protein resides in the cytoplasmic granule. The enzyme catalyses an [RNA] containing cytidine + H2O = an [RNA]-3'-cytidine-3'-phosphate + a 5'-hydroxy-ribonucleotide-3'-[RNA].. It carries out the reaction an [RNA] containing uridine + H2O = an [RNA]-3'-uridine-3'-phosphate + a 5'-hydroxy-ribonucleotide-3'-[RNA].. This is a non-secretory ribonuclease. It is a pyrimidine specific nuclease with a slight preference for U. Cytotoxin and helminthotoxin. Possesses a wide variety of biological activities. This is Non-secretory ribonuclease (RNASE2) from Macaca nemestrina (Pig-tailed macaque).